Consider the following 347-residue polypeptide: MTEEMSKESPPPPPTSFSSLPDDVALDCRARISRFHYPTLSLVSKGFRTLIASPELEATRSFIGKPENHLCVCLRLYKNPNPLWFIFSPIPKQKLKPIVPWFPNQQYPQYPTVVSNGSQIYIIGGFVRRRRSNRVSIFDYRTYQWRRLPKMRQPRVYPAASVIDGKIYVIGGFRGSMPTDIENSGEVYDPKTNTWEPILLTSLDLTVQNVFKKKHYFTTKACLVINKVSCLLYVSDGKLYWREDKEGFECRKVYGLAEQSSNLFRVVANSGGGGRVTVWWKSMTKGCEFDCLLTEECETKIWCAEISLERRGLRELRGFVEWSKEVFTIDRCDYIYDFISQYVTVTY.

The segment at 1-21 (MTEEMSKESPPPPPTSFSSLP) is disordered. In terms of domain architecture, F-box spans 14-62 (PTSFSSLPDDVALDCRARISRFHYPTLSLVSKGFRTLIASPELEATRSF). Kelch repeat units follow at residues 119 to 165 (QIYI…VIDG) and 167 to 215 (IYVI…KKKH).

The chain is F-box/kelch-repeat protein At5g03020 from Arabidopsis thaliana (Mouse-ear cress).